The sequence spans 177 residues: Putative fimbrin-like protein FimI (177 aa).

An N-terminal signal peptide occupies residues 1–19 (MIRKGAALVGLVLMSPVIA). A disulfide bond links cysteine 40 and cysteine 81.

It belongs to the fimbrial protein family.

Its subcellular location is the fimbrium. The sequence is that of Putative fimbrin-like protein FimI (fimI) from Salmonella typhi.